Here is a 256-residue protein sequence, read N- to C-terminus: MSSSRQFLSSALRQCRAAGQRTAQFSTTSPAAAIRDIPTTSFQNAPRTNTNTSSPSSNNNNNAGSSQYKSDMFNLLNSGAGSRGGRDSYNNARDVDGGQRYGSNSQKVQELLQSEVTSNNYMRMMRRRWNNGDVYAPRDLSPYEMKGRNGGWVEAADVVDELGFSPLDNYRNFSLISDYITPFGRIRHSKETGLKPVNQRKIAKMVRRAIGLGIHPSVHKHPEILKNSNGRHLLPLVVPKGQKANKTKNFDGEDEN.

Positions 19–106 (GQRTAQFSTT…GGQRYGSNSQ (88 aa)) are disordered. Positions 21–30 (RTAQFSTTSP) are enriched in polar residues. Positions 44–66 (NAPRTNTNTSSPSSNNNNNAGSS) are enriched in low complexity.

The protein belongs to the bacterial ribosomal protein bS18 family. Component of the mitochondrial small ribosomal subunit (mt-SSU). Mature N.crassa 74S mitochondrial ribosomes consist of a small (37S) and a large (54S) subunit. The 37S small subunit contains a 16S ribosomal RNA (16S mt-rRNA) and 32 different proteins. The 54S large subunit contains a 23S rRNA (23S mt-rRNA) and 42 different proteins.

The protein localises to the mitochondrion. Component of the mitochondrial ribosome (mitoribosome), a dedicated translation machinery responsible for the synthesis of mitochondrial genome-encoded proteins, including at least some of the essential transmembrane subunits of the mitochondrial respiratory chain. The mitoribosomes are attached to the mitochondrial inner membrane and translation products are cotranslationally integrated into the membrane. The protein is Small ribosomal subunit protein bS18m (rsm18) of Neurospora crassa (strain ATCC 24698 / 74-OR23-1A / CBS 708.71 / DSM 1257 / FGSC 987).